We begin with the raw amino-acid sequence, 184 residues long: Isopentenyl-diphosphate Delta-isomerase (184 aa).

Positions 26 and 33 each coordinate Mn(2+). The 135-residue stretch at 31-165 folds into the Nudix hydrolase domain; that stretch reads PLHLAFSCYL…PSAFSPWLGL (135 aa). Residue C68 is part of the active site. H70 lines the Mn(2+) pocket. E88 lines the Mg(2+) pocket. 2 residues coordinate Mn(2+): E115 and E117. Residue E117 is part of the active site.

Belongs to the IPP isomerase type 1 family. Mg(2+) is required as a cofactor. It depends on Mn(2+) as a cofactor.

The protein localises to the cytoplasm. It catalyses the reaction isopentenyl diphosphate = dimethylallyl diphosphate. It functions in the pathway isoprenoid biosynthesis; dimethylallyl diphosphate biosynthesis; dimethylallyl diphosphate from isopentenyl diphosphate: step 1/1. Functionally, catalyzes the 1,3-allylic rearrangement of the homoallylic substrate isopentenyl (IPP) to its highly electrophilic allylic isomer, dimethylallyl diphosphate (DMAPP). In Paenarthrobacter aurescens (strain TC1), this protein is Isopentenyl-diphosphate Delta-isomerase.